A 533-amino-acid chain; its full sequence is Probable protein kinase UbiB (533 aa).

Residues 24 to 44 traverse the membrane as a helical segment; the sequence is LILELPMLPWWLRLLGATLPW. Residues 126-494 form the Protein kinase domain; that stretch reads RFEREPLASA…WKGSRHDWLG (369 aa). Residues 132-140 and K154 contribute to the ATP site; that span reads LASASVAQV. Residue D289 is the Proton acceptor of the active site. Residues 510–530 traverse the membrane as a helical segment; it reads LGQQLEAWPAWVMLAGGVFLI.

It belongs to the ABC1 family. UbiB subfamily.

Its subcellular location is the cell inner membrane. The protein operates within cofactor biosynthesis; ubiquinone biosynthesis [regulation]. Is probably a protein kinase regulator of UbiI activity which is involved in aerobic coenzyme Q (ubiquinone) biosynthesis. In Pseudomonas aeruginosa (strain UCBPP-PA14), this protein is Probable protein kinase UbiB.